The sequence spans 246 residues: Proteolipid protein DM gamma (246 aa).

Helical transmembrane passes span 19 to 35, 71 to 87, 118 to 134, and 206 to 222; these read LLAT…FCGC, VIYG…IILL, VFLT…VFGF, and FIVA…ALLI.

It belongs to the myelin proteolipid protein family. As to expression, highly expressed in white matter in myelinating shark brain.

It is found in the membrane. The sequence is that of Proteolipid protein DM gamma from Squalus acanthias (Spiny dogfish).